Here is a 278-residue protein sequence, read N- to C-terminus: HTH-type transcriptional activator RhaS (278 aa).

In terms of domain architecture, HTH araC/xylS-type spans 174–272 (NLLLAWLEDH…NWSPRDIRQG (99 aa)). 2 consecutive DNA-binding regions (H-T-H motif) follow at residues 191–212 (DAVA…KQQT) and 239–262 (VTDI…RREF).

As to quaternary structure, binds DNA as a dimer.

The protein resides in the cytoplasm. Functionally, activates expression of the rhaBAD and rhaT operons. The protein is HTH-type transcriptional activator RhaS of Escherichia coli O81 (strain ED1a).